Reading from the N-terminus, the 303-residue chain is UDP-N-acetylenolpyruvoylglucosamine reductase (303 aa).

Residues 23–188 form the FAD-binding PCMH-type domain; that stretch reads KVGGPADYLV…ISAKFALKPG (166 aa). R167 is an active-site residue. Residue S217 is the Proton donor of the active site. E287 is a catalytic residue.

The protein belongs to the MurB family. The cofactor is FAD.

Its subcellular location is the cytoplasm. It carries out the reaction UDP-N-acetyl-alpha-D-muramate + NADP(+) = UDP-N-acetyl-3-O-(1-carboxyvinyl)-alpha-D-glucosamine + NADPH + H(+). The protein operates within cell wall biogenesis; peptidoglycan biosynthesis. Cell wall formation. This chain is UDP-N-acetylenolpyruvoylglucosamine reductase, found in Streptococcus uberis (strain ATCC BAA-854 / 0140J).